A 484-amino-acid chain; its full sequence is Glutamate--tRNA ligase (484 aa).

The 'HIGH' region motif lies at 11-21; that stretch reads PSPTGLLHIGN. The 'KMSKS' region signature appears at 255–259; that stretch reads KLSKR. Residue lysine 258 coordinates ATP.

The protein belongs to the class-I aminoacyl-tRNA synthetase family. Glutamate--tRNA ligase type 1 subfamily. Monomer.

It is found in the cytoplasm. The catalysed reaction is tRNA(Glu) + L-glutamate + ATP = L-glutamyl-tRNA(Glu) + AMP + diphosphate. Functionally, catalyzes the attachment of glutamate to tRNA(Glu) in a two-step reaction: glutamate is first activated by ATP to form Glu-AMP and then transferred to the acceptor end of tRNA(Glu). This Streptococcus agalactiae serotype V (strain ATCC BAA-611 / 2603 V/R) protein is Glutamate--tRNA ligase.